The primary structure comprises 456 residues: Palmitoyltransferase PFA4 (456 aa).

The Cytoplasmic segment spans residues methionine 1–valine 9. Residues tryptophan 10–isoleucine 30 form a helical membrane-spanning segment. Topologically, residues tryptophan 31–glutamate 37 are lumenal. Residues isoleucine 38–tryptophan 58 form a helical membrane-spanning segment. Over asparagine 59 to glycine 138 the chain is Cytoplasmic. Positions arginine 95 to leucine 145 constitute a DHHC domain. Cysteine 125 acts as the S-palmitoyl cysteine intermediate in catalysis. A helical transmembrane segment spans residues histidine 139 to valine 159. Residues arginine 160 to aspartate 176 lie on the Lumenal side of the membrane. A helical transmembrane segment spans residues valine 177–phenylalanine 197. The Cytoplasmic segment spans residues serine 198–histidine 456. Positions proline 284–tyrosine 377 are disordered. Residues proline 285–proline 298 are compositionally biased toward pro residues. A compositionally biased stretch (polar residues) spans asparagine 309–leucine 321. Over residues serine 337–asparagine 352 the composition is skewed to basic and acidic residues.

It belongs to the DHHC palmitoyltransferase family. PFA4 subfamily.

The protein localises to the endoplasmic reticulum membrane. It carries out the reaction L-cysteinyl-[protein] + hexadecanoyl-CoA = S-hexadecanoyl-L-cysteinyl-[protein] + CoA. Its function is as follows. Mediates the reversible addition of palmitate to target proteins, thereby regulating their membrane association and biological function. Responsible for the modification of a subset of proteins that are critical in cryptococcal pathogenesis, with substrates involved in cell wall synthesis, signal transduction, and membrane trafficking. Palmitoylates chitin synthase CHS3. The sequence is that of Palmitoyltransferase PFA4 from Cryptococcus neoformans var. grubii serotype A (strain H99 / ATCC 208821 / CBS 10515 / FGSC 9487) (Filobasidiella neoformans var. grubii).